A 413-amino-acid polypeptide reads, in one-letter code: RNA-binding protein 41 (413 aa).

Residues 223 to 235 are compositionally biased toward polar residues; sequence SVGDSGTAESPSL. A disordered region spans residues 223 to 247; that stretch reads SVGDSGTAESPSLLQDKGKQAAQGK. Serine 232 is subject to Phosphoserine. One can recognise an RRM domain in the interval 309–387; it reads KVLYLKNLSP…KILVIEFGKN (79 aa).

Functionally, may bind RNA. This chain is RNA-binding protein 41 (RBM41), found in Homo sapiens (Human).